An 870-amino-acid chain; its full sequence is Dynamin-2 (870 aa).

The Dynamin-type G domain occupies His-28–Pro-294. Residues Gly-38 to Ser-45 are G1 motif. Residues Ser-41, Gly-43, Lys-44, Ser-45, Ser-46, Arg-59, and Gly-60 each coordinate GDP. The segment at Val-64 to Arg-66 is G2 motif. Positions Asp-136 to Gly-139 are G3 motif. Positions Thr-205–Asp-208 are G4 motif. The GDP site is built by Lys-206, Asp-208, and Asp-211. A Phosphotyrosine modification is found at Tyr-231. The tract at residues Val-235–Ser-238 is G5 motif. Residues Asn-236, Arg-237, and Gln-239 each contribute to the GDP site. N6-acetyllysine is present on Lys-299. A PH domain is found at Leu-519–Val-625. A Phosphotyrosine modification is found at Tyr-597. Lys-598 is subject to N6-acetyllysine. In terms of domain architecture, GED spans Val-653–Val-744. The disordered stretch occupies residues Thr-741–Asp-870. Phosphothreonine is present on Thr-755. The span at Trp-756–Pro-767 shows a compositional bias: polar residues. A Phosphoserine; by CDK1 modification is found at Ser-764. A compositionally biased stretch (pro residues) spans Ser-826–Val-846. The segment covering Pro-847–Ala-864 has biased composition (low complexity).

It belongs to the TRAFAC class dynamin-like GTPase superfamily. Dynamin/Fzo/YdjA family. Oligomerizes into a helical polymer that self-assembles around the vesicle membrane, when associated to the menbrane through lipid binding. Interacts with SHANK1 and SHANK2. Interacts with SNX9. Interacts (via C-terminal proline-rich domain (PRD)) with SNX18 (via SH3 domain); this interaction regulates ATG9A and ATG16L1 trafficking from recycling endosomes to sites of autophagosome formation. Interacts with SNX33 (via SH3 domain). Interacts with MYO1E (via SH3 domain). Interacts with PSTPIP1 (via SH3 domain). Interacts with CTNND2. Interacts (via C-terminal proline-rich domain (PRD)) with BIN1 (via SH3 domain); this interaction allows the recruitment of DNM2 to the membrane tubules and inhibits self-assembly-stimulated GTPase activity on the membrane. Interacts with GABARAP, GABARAPL1 and GABARAPL2. Interacts with MAP1LC3B (the lipidate and non-lipidated LC3 form); this interaction mediates recycling endosome scission leading to autophagosome release. Interacts with ITSN1. Interacts (via C-terminal proline-rich domain (PRD)) with SH3BP4 (via SH3 domain); this interaction controls the GTPase activity and is prevented by EGFR-induced tyrosine phosphorylation of either DNM2 or SH3BP4. Interacts with MYOF. May interact with PIK3C3. May be a component of a complex composed of RAB5A (in GDP-bound form), DYN2 and PIK3C3. Interacts with SDC4; this interaction is markedly enhanced at focal ahesion site upon induction of focal adhesions and stress-fiber formation. Interacts with ACTN1. Interacts with CTTN; this interaction stimulates the intrinsic GTPase activity of DNM2 and stabilizes the association of DNM2 and actin filaments; in addition this interaction is stimulated by ligand binding to the receptor, leading to the recruitment of the DNM2-CTTN complex to the sequestered receptor-ligand complex to its internalization. Interacts with NOSTRIN (via SH3 domain); this interaction allows the recruitment of NOS3 to dynamin-positive structures. Interacts with TUBG1; this interaction may participate in centrosome cohesion. In terms of processing, phosphorylation at Ser-848 by GSK3-alpha relieves the inhibition of BIN1 and promotes endocytosis. Phosphorylation at Ser-764 by CDK1 is greatly increased upon mitotic entry. It regulates cytokinesis downstream of calcineurin, and does not affect clathrin-mediated endocytosis. Dephosphorylated by calcineurin/PP2 during cytokinesis in a Ca(2+)- and calmodulin-dependent manner. Phosphorylated on tyrosine residues by EGFR. Phosphorylated on tyrosine residues after activation of SRC. As to expression, expressed in most tissues during embryonic development, including the peripheral nervous system although no expression is evident in skeletal muscle or heart.

It localises to the cytoplasm. The protein localises to the cytoskeleton. The protein resides in the cytoplasmic vesicle. It is found in the clathrin-coated vesicle. Its subcellular location is the cell projection. It localises to the uropodium. The protein localises to the endosome. The protein resides in the microtubule organizing center. It is found in the centrosome. Its subcellular location is the centriole. It localises to the recycling endosome. The protein localises to the phagocytic cup. The protein resides in the phagosome membrane. It is found in the podosome. Its subcellular location is the cell junction. It localises to the postsynaptic density. The protein localises to the synapse. The protein resides in the synaptosome. It is found in the midbody. Its subcellular location is the membrane. It localises to the clathrin-coated pit. The catalysed reaction is GTP + H2O = GDP + phosphate + H(+). Its function is as follows. Catalyzes the hydrolysis of GTP and utilizes this energy to mediate vesicle scission at plasma membrane during endocytosis and filament remodeling at many actin structures during organization of the actin cytoskeleton. Plays an important role in vesicular trafficking processes, namely clathrin-mediated endocytosis (CME), exocytic and clathrin-coated vesicle from the trans-Golgi network, and PDGF stimulated macropinocytosis. During vesicular trafficking process, associates to the membrane, through lipid binding, and self-assembles into ring-like structure through oligomerization to form a helical polymer around the vesicle membrane and leading to vesicle scission. Plays a role in organization of the actin cytoskeleton by mediating arrangement of stress fibers and actin bundles in podocytes. During organization of the actin cytoskeleton, self-assembles into ring-like structure that directly bundles actin filaments to form typical membrane tubules decorated with dynamin spiral polymers. Self-assembly increases GTPase activity and the GTP hydrolysis causes the rapid depolymerization of dynamin spiral polymers, and results in dispersion of actin bundles. Remodels, through its interaction with CTTN, bundled actin filaments in a GTPase-dependent manner and plays a role in orchestrating the global actomyosin cytoskeleton. The interaction with CTTN stabilizes the interaction of DNM2 and actin filaments and stimulates the intrinsic GTPase activity that results in actin filament-barbed ends and increases the sensitivity of filaments in bundles to the actin depolymerizing factor, CFL1. Plays a role in the autophagy process, by participating in the formation of ATG9A vesicles destined for the autophagosomes through its interaction with SNX18, by mediating recycling endosome scission leading to autophagosome release through MAP1LC3B interaction. Also regulates maturation of apoptotic cell corpse-containing phagosomes by recruiting PIK3C3 to the phagosome membrane. Also plays a role in cytokinesis. May participate in centrosome cohesion through its interaction with TUBG1. Plays a role in the regulation of neuron morphology, axon growth and formation of neuronal growth cones. Involved in membrane tubulation. This chain is Dynamin-2, found in Mus musculus (Mouse).